The chain runs to 258 residues: MAKRLDLNDVNIYYGDFHAVQDVNLHIPPKAVTAFIGPSGCGKSTVLRTLNRMHEVIPGAYVKGEILLDGEDIYGPKIDPVAVRNTIGMVFQKANPFPTMSIEENVVAGLKLSGEKNKKKLREVAERALRGANLWDEVKDRLDKPGGGLSGGQQQRLCIARAIAVEPEVLLMDEPCSALDPISTLAVEDLIHELKEDFTIVIVTHNMQQAARVSDQTAFYSLEATGKPGQLVEVGPTKQIFENPTKKETEDYISGRFG.

One can recognise an ABC transporter domain in the interval 5–253 (LDLNDVNIYY…PTKKETEDYI (249 aa)). Position 37-44 (37-44 (GPSGCGKS)) interacts with ATP.

The protein belongs to the ABC transporter superfamily. Phosphate importer (TC 3.A.1.7) family. As to quaternary structure, the complex is composed of two ATP-binding proteins (PstB), two transmembrane proteins (PstC and PstA) and a solute-binding protein (PstS).

It localises to the cell membrane. It carries out the reaction phosphate(out) + ATP + H2O = ADP + 2 phosphate(in) + H(+). Functionally, part of the ABC transporter complex PstSACB involved in phosphate import. Responsible for energy coupling to the transport system. In Corynebacterium jeikeium (strain K411), this protein is Phosphate import ATP-binding protein PstB.